The sequence spans 1025 residues: Transcription factor tau 131 kDa subunit (1025 aa).

The span at Met1–Asn26 shows a compositional bias: basic and acidic residues. The segment at Met1–Ser71 is disordered. Residues Asp46–Tyr65 are compositionally biased toward acidic residues. TPR repeat units follow at residues Val128–Asn161, Phe162–Asp195, Trp196–Glu229, Trp230–Asp263, and Ala264–Arg297. A sufficient to bind BDP1 region spans residues Val128–Gln569. The tract at residues Leu309–Asp334 is disordered. Residue Ser311 is modified to Phosphoserine. The span at Ser311–Glu325 shows a compositional bias: acidic residues. TPR repeat units follow at residues Ile432–Asp465, Ala467–Thr501, Thr502–Asp535, Leu536–Gln569, Pro875–Asp908, and Gln959–Gly992.

In terms of assembly, component of the TFIIIC complex composed of TFC1, TFC3, TFC4, TFC6, TFC7 and TFC8. The subunits are organized in two globular domains, tauA and tauB, connected by a proteolysis-sensitive and flexible linker. Interacts with TFC1, TFC3, TFC6, TFIIIB subunits BRF1 and BDP1, and with RNA polymerase III subunit RPC10. Post-translationally, phosphorylated.

The protein localises to the nucleus. In terms of biological role, TFIIIC mediates tRNA and 5S RNA gene activation by binding to intragenic promoter elements. Upstream of the transcription start site, TFIIIC assembles the initiation complex TFIIIB-TFIIIC-tDNA, which is sufficient for RNA polymerase III recruitment and function. Part of the tauA domain of TFIIIC that binds boxA DNA promoter sites of tRNA and similar genes. TFC4 is the TFIIIB-assembling subunit of TFIIIC and essential for viability. In Saccharomyces cerevisiae (strain ATCC 204508 / S288c) (Baker's yeast), this protein is Transcription factor tau 131 kDa subunit (TFC4).